Here is a 514-residue protein sequence, read N- to C-terminus: Histidine ammonia-lyase (514 aa).

A cross-link (5-imidazolinone (Ala-Gly)) is located at residues 143–145 (ASG). Position 144 is a 2,3-didehydroalanine (Ser) (Ser-144).

The protein belongs to the PAL/histidase family. Post-translationally, contains an active site 4-methylidene-imidazol-5-one (MIO), which is formed autocatalytically by cyclization and dehydration of residues Ala-Ser-Gly.

It is found in the cytoplasm. It catalyses the reaction L-histidine = trans-urocanate + NH4(+). The protein operates within amino-acid degradation; L-histidine degradation into L-glutamate; N-formimidoyl-L-glutamate from L-histidine: step 1/3. This is Histidine ammonia-lyase from Photorhabdus laumondii subsp. laumondii (strain DSM 15139 / CIP 105565 / TT01) (Photorhabdus luminescens subsp. laumondii).